Reading from the N-terminus, the 80-residue chain is Large ribosomal subunit protein bL31 (80 aa).

Zn(2+) is bound by residues Cys-16, Cys-18, Cys-38, and Cys-41.

The protein belongs to the bacterial ribosomal protein bL31 family. Type A subfamily. As to quaternary structure, part of the 50S ribosomal subunit. The cofactor is Zn(2+).

Functionally, binds the 23S rRNA. This Rhodococcus jostii (strain RHA1) protein is Large ribosomal subunit protein bL31.